We begin with the raw amino-acid sequence, 114 residues long: Small ribosomal subunit protein uS14m (114 aa).

This sequence belongs to the universal ribosomal protein uS14 family.

The protein localises to the mitochondrion. This Eremothecium gossypii (strain ATCC 10895 / CBS 109.51 / FGSC 9923 / NRRL Y-1056) (Yeast) protein is Small ribosomal subunit protein uS14m (MRP2).